A 204-amino-acid polypeptide reads, in one-letter code: MSDLVAKTAIDRRLADIVTPVIEGMGFELVRLRLMSGKTRTLQIMADRPDGGIVVDECAEISTAVSAALDVEDPIEENYTLEVSSPGIDRPLTRLKDFDVWTGYEARIETTELIDGRRRFKGELAGTEGDEVLITIEDGRDSYVTIGLKFDWLADAKLILTEELIAEMLRQKKASGNFDESQFDEIEESEGEEADEAEQPPTKH.

The disordered stretch occupies residues 176 to 204 (GNFDESQFDEIEESEGEEADEAEQPPTKH). Residues 181–198 (SQFDEIEESEGEEADEAE) show a composition bias toward acidic residues.

Belongs to the RimP family.

It localises to the cytoplasm. Functionally, required for maturation of 30S ribosomal subunits. In Cereibacter sphaeroides (strain ATCC 17029 / ATH 2.4.9) (Rhodobacter sphaeroides), this protein is Ribosome maturation factor RimP.